The primary structure comprises 40 residues: Acyl-CoA-binding protein 2 (40 aa).

Residues 1–15 (ALKEEFEEHAEKAKT) are compositionally biased toward basic and acidic residues. Positions 1–25 (ALKEEFEEHAEKAKTLPENTSSENK) are disordered. The ACB domain maps to 2-40 (LKEEFEEHAEKAKTLPENTSSENKLTLYGLYKQATVGNV).

This sequence belongs to the ACBP family.

The protein localises to the cytoplasm. Its function is as follows. Binds medium- and long-chain acyl-CoA esters with very high affinity and may function as an intracellular carrier of acyl-CoA esters. The protein is Acyl-CoA-binding protein 2 of Digitalis lanata (Grecian foxglove).